A 224-amino-acid polypeptide reads, in one-letter code: Ribosome maturation factor RimM (224 aa).

Positions 1–12 (MARRPGSSSRGP) are enriched in low complexity. 2 disordered regions span residues 1–46 (MARR…PSLV) and 204–224 (VADP…DDPG). The PRC barrel domain maps to 137-211 (EDEFFLTDLI…KVVADPPEDL (75 aa)).

Belongs to the RimM family. In terms of assembly, binds ribosomal protein uS19.

The protein localises to the cytoplasm. An accessory protein needed during the final step in the assembly of 30S ribosomal subunit, possibly for assembly of the head region. Essential for efficient processing of 16S rRNA. May be needed both before and after RbfA during the maturation of 16S rRNA. It has affinity for free ribosomal 30S subunits but not for 70S ribosomes. The protein is Ribosome maturation factor RimM of Methylorubrum populi (strain ATCC BAA-705 / NCIMB 13946 / BJ001) (Methylobacterium populi).